The following is a 142-amino-acid chain: Putative pre-16S rRNA nuclease (142 aa).

The protein belongs to the YqgF nuclease family.

The protein resides in the cytoplasm. Could be a nuclease involved in processing of the 5'-end of pre-16S rRNA. The protein is Putative pre-16S rRNA nuclease of Shouchella clausii (strain KSM-K16) (Alkalihalobacillus clausii).